A 312-amino-acid polypeptide reads, in one-letter code: Olfactory receptor 6X1 (312 aa).

Residues 1 to 23 (MRNGTVITEFILLGFPVIQGLQT) are Extracellular-facing. N3 carries N-linked (GlcNAc...) asparagine glycosylation. The chain crosses the membrane as a helical span at residues 24 to 44 (PLFIAIFLTYILTLAGNGLII). At 45–52 (ATVWAEPR) the chain is on the cytoplasmic side. Residues 53 to 73 (LQIPMYFFLCNLSFLEIWYTT) traverse the membrane as a helical segment. At 74–97 (TVIPKLLGTFVVARTVICMSCCLL) the chain is on the extracellular side. Residues C95 and C187 are joined by a disulfide bond. Residues 98-118 (QAFFHFFVGTTEFLILTIMSF) form a helical membrane-spanning segment. Residues 119-137 (DRYLTICNPLHHPTIMTSK) are Cytoplasmic-facing. The helical transmembrane segment at 138 to 158 (LCLQLALSSWVVGFTIVFCQT) threads the bilayer. At 159 to 195 (MLLIQLPFCGNNVISHFYCDVGPSLKAACIDTSILEL) the chain is on the extracellular side. The helical transmembrane segment at 196-215 (LGVIATILVIPGSLLFNMIS) threads the bilayer. Residues 216–235 (YIYILSAILRIPSATGHQKT) are Cytoplasmic-facing. A helical transmembrane segment spans residues 236–256 (FSTCASHLTVVSLLYGAVLFM). Topologically, residues 257–269 (YLRPTAHSSFKIN) are extracellular. A helical membrane pass occupies residues 270–290 (KVVSVLNTILTPLLNPFIYTI). Residues 291–312 (RNKEVKGALRKAMTCPKTGHAK) are Cytoplasmic-facing.

It belongs to the G-protein coupled receptor 1 family.

Its subcellular location is the cell membrane. Functionally, odorant receptor. This Homo sapiens (Human) protein is Olfactory receptor 6X1 (OR6X1).